Reading from the N-terminus, the 346-residue chain is uncharacterized protein (346 aa).

Residues 321–346 are disordered; that stretch reads TPWGTHSVAGVGPPPYARSGPASATT.

This is an uncharacterized protein from Mycobacterium tuberculosis (strain CDC 1551 / Oshkosh).